We begin with the raw amino-acid sequence, 758 residues long: 5-methyltetrahydropteroyltriglutamate--homocysteine methyltransferase (758 aa).

5-methyltetrahydropteroyltri-L-glutamate is bound by residues 16–19 (RELK) and lysine 112. Residues 433–435 (IGS) and glutamate 486 each bind L-homocysteine. L-methionine contacts are provided by residues 433 to 435 (IGS) and glutamate 486. 5-methyltetrahydropteroyltri-L-glutamate contacts are provided by residues 517–518 (RC) and tryptophan 563. Aspartate 601 contacts L-homocysteine. Aspartate 601 contacts L-methionine. Position 607 (glutamate 607) interacts with 5-methyltetrahydropteroyltri-L-glutamate. 3 residues coordinate Zn(2+): histidine 643, cysteine 645, and glutamate 667. Histidine 696 (proton donor) is an active-site residue. Cysteine 728 serves as a coordination point for Zn(2+).

The protein belongs to the vitamin-B12 independent methionine synthase family. Zn(2+) is required as a cofactor.

It carries out the reaction 5-methyltetrahydropteroyltri-L-glutamate + L-homocysteine = tetrahydropteroyltri-L-glutamate + L-methionine. It participates in amino-acid biosynthesis; L-methionine biosynthesis via de novo pathway; L-methionine from L-homocysteine (MetE route): step 1/1. Its function is as follows. Catalyzes the transfer of a methyl group from 5-methyltetrahydrofolate to homocysteine resulting in methionine formation. The sequence is that of 5-methyltetrahydropteroyltriglutamate--homocysteine methyltransferase from Neisseria meningitidis serogroup B (strain ATCC BAA-335 / MC58).